The chain runs to 425 residues: Potassium/proton antiporter CemA (425 aa).

The helical transmembrane segment at 89 to 109 (LFLTTVKCLFILLFVPLGINF) threads the bilayer. Positions 159-278 (LSENQIFFGL…KTDFASVFRT (120 aa)) are insert. Residues 173–192 (STFPSSEKSQKSEHFSNQDE) form a disordered region. The span at 180-192 (KSQKSEHFSNQDE) shows a compositional bias: basic and acidic residues. The next 3 helical transmembrane spans lie at 300–320 (IEAITNFFADVLSFITLCYLL), 350–370 (ILFITDLLVGYHSPNIWELFF), and 386–406 (IFLLVATLPVLLDVLFKYLIF).

It belongs to the CemA family.

The protein resides in the plastid. It localises to the chloroplast inner membrane. The catalysed reaction is K(+)(in) + H(+)(out) = K(+)(out) + H(+)(in). Functionally, contributes to K(+)/H(+) antiport activity by supporting proton efflux to control proton extrusion and homeostasis in chloroplasts in a light-dependent manner to modulate photosynthesis. Prevents excessive induction of non-photochemical quenching (NPQ) under continuous-light conditions. Indirectly promotes efficient inorganic carbon uptake into chloroplasts. This Tetradesmus obliquus (Green alga) protein is Potassium/proton antiporter CemA.